The following is a 215-amino-acid chain: Kunitz trypsin inhibitor 4 (215 aa).

An N-terminal signal peptide occupies residues 1–28 (MTKTTKTMNPKFYLVLALTAVLASNAYG). Disulfide bonds link Cys66-Cys112 and Cys165-Cys176. The N-linked (GlcNAc...) asparagine glycan is linked to Asn206.

It belongs to the protease inhibitor I3 (leguminous Kunitz-type inhibitor) family. Expressed in roots.

It is found in the endoplasmic reticulum. Its function is as follows. Exhibits Kunitz trypsin protease inhibitor activity. Involved in modulating programmed cell death (PCD) in plant-pathogen interactions. Can inhibit both serine proteases and cysteine proteases. May be involved in the modulation of the proteases that participate in the hydrolysis of dietary proteins in the gut of spider mites. The polypeptide is Kunitz trypsin inhibitor 4 (Arabidopsis thaliana (Mouse-ear cress)).